The primary structure comprises 658 residues: Biosynthetic arginine decarboxylase (658 aa).

Lysine 127 is modified (N6-(pyridoxal phosphate)lysine). 307-317 provides a ligand contact to substrate; that stretch reads FDVGGGLGVDY.

The protein belongs to the Orn/Lys/Arg decarboxylase class-II family. SpeA subfamily. In terms of assembly, homotetramer. Mg(2+) serves as cofactor. The cofactor is pyridoxal 5'-phosphate.

The protein localises to the periplasm. It catalyses the reaction L-arginine + H(+) = agmatine + CO2. The protein operates within amine and polyamine biosynthesis; agmatine biosynthesis; agmatine from L-arginine: step 1/1. In terms of biological role, catalyzes the biosynthesis of agmatine from arginine. The sequence is that of Biosynthetic arginine decarboxylase (speA) from Escherichia coli O157:H7.